Here is a 108-residue protein sequence, read N- to C-terminus: Gibberellin-regulated protein 7 (108 aa).

The signal sequence occupies residues M1 to A23.

It belongs to the GASA family. In terms of processing, six disulfide bonds may be present.

It localises to the secreted. Gibberellin-regulated protein that may function in hormonal controlled steps of development such as seed germination, flowering and seed maturation. The protein is Gibberellin-regulated protein 7 (GASA7) of Arabidopsis thaliana (Mouse-ear cress).